The following is a 117-amino-acid chain: Ribosome-binding factor A (117 aa).

Belongs to the RbfA family. In terms of assembly, monomer. Binds 30S ribosomal subunits, but not 50S ribosomal subunits or 70S ribosomes.

It localises to the cytoplasm. One of several proteins that assist in the late maturation steps of the functional core of the 30S ribosomal subunit. Associates with free 30S ribosomal subunits (but not with 30S subunits that are part of 70S ribosomes or polysomes). Required for efficient processing of 16S rRNA. May interact with the 5'-terminal helix region of 16S rRNA. The protein is Ribosome-binding factor A of Bacillus subtilis (strain 168).